Here is a 129-residue protein sequence, read N- to C-terminus: Small ribosomal subunit protein uS11 (129 aa).

Belongs to the universal ribosomal protein uS11 family. As to quaternary structure, part of the 30S ribosomal subunit. Interacts with proteins S7 and S18. Binds to IF-3.

In terms of biological role, located on the platform of the 30S subunit, it bridges several disparate RNA helices of the 16S rRNA. Forms part of the Shine-Dalgarno cleft in the 70S ribosome. The sequence is that of Small ribosomal subunit protein uS11 from Pelotomaculum thermopropionicum (strain DSM 13744 / JCM 10971 / SI).